The chain runs to 388 residues: Galactokinase (388 aa).

Position 32 to 35 (32 to 35) interacts with substrate; sequence EHTD. ATP is bound by residues Ser66 and 123–129; that span reads GASLSSS. Ser129 and Glu161 together coordinate Mg(2+). The active-site Proton acceptor is the Asp173. Tyr223 serves as a coordination point for substrate.

The protein belongs to the GHMP kinase family. GalK subfamily.

It localises to the cytoplasm. It carries out the reaction alpha-D-galactose + ATP = alpha-D-galactose 1-phosphate + ADP + H(+). It functions in the pathway carbohydrate metabolism; galactose metabolism. Its function is as follows. Catalyzes the transfer of the gamma-phosphate of ATP to D-galactose to form alpha-D-galactose-1-phosphate (Gal-1-P). The sequence is that of Galactokinase from Staphylococcus carnosus (strain TM300).